The following is a 269-amino-acid chain: Shikimate dehydrogenase (NADP(+)) (269 aa).

Shikimate contacts are provided by residues 14-16 (SKS) and Thr61. Lys65 serves as the catalytic Proton acceptor. Glu77 lines the NADP(+) pocket. Residues Asn86 and Asp102 each contribute to the shikimate site. Residues 126–130 (GAGGA), 149–154 (NRTLSK), and Met213 each bind NADP(+). A shikimate-binding site is contributed by Tyr215. Residue Gly238 coordinates NADP(+).

Belongs to the shikimate dehydrogenase family. In terms of assembly, homodimer.

The enzyme catalyses shikimate + NADP(+) = 3-dehydroshikimate + NADPH + H(+). It participates in metabolic intermediate biosynthesis; chorismate biosynthesis; chorismate from D-erythrose 4-phosphate and phosphoenolpyruvate: step 4/7. Functionally, involved in the biosynthesis of the chorismate, which leads to the biosynthesis of aromatic amino acids. Catalyzes the reversible NADPH linked reduction of 3-dehydroshikimate (DHSA) to yield shikimate (SA). In Pasteurella multocida (strain Pm70), this protein is Shikimate dehydrogenase (NADP(+)).